The primary structure comprises 309 residues: Probable sugar phosphate/phosphate translocator At5g05820 (309 aa).

The next 10 helical transmembrane spans lie at 9–29 (FFTI…LLLN), 42–62 (IFLT…AIAW), 77–97 (FFKI…GNIS), 100–120 (FLPV…TAVF), 130–150 (AWLT…ASGG), 154–174 (FHLF…LKSV), 192–212 (LLLY…LIME), 229–249 (IVWY…TNFL), 256–278 (ALTL…ILIF), and 282–301 (VSVT…ILYS). The EamA domain occupies 30–147 (KYLLSNYGFK…VPVVTGVVIA (118 aa)).

The protein belongs to the TPT transporter family. TPT (TC 2.A.7.9) subfamily.

The protein localises to the membrane. This is Probable sugar phosphate/phosphate translocator At5g05820 from Arabidopsis thaliana (Mouse-ear cress).